The primary structure comprises 346 residues: DNA primase small subunit PriS (346 aa).

Residues Asp-97, Asp-99, and Asp-278 contribute to the active site.

The protein belongs to the eukaryotic-type primase small subunit family. Heterodimer of a small subunit (PriS) and a large subunit (PriL). Requires Mg(2+) as cofactor. It depends on Mn(2+) as a cofactor.

In terms of biological role, catalytic subunit of DNA primase, an RNA polymerase that catalyzes the synthesis of short RNA molecules used as primers for DNA polymerase during DNA replication. The small subunit contains the primase catalytic core and has DNA synthesis activity on its own. Binding to the large subunit stabilizes and modulates the activity, increasing the rate of DNA synthesis while decreasing the length of the DNA fragments, and conferring RNA synthesis capability. The DNA polymerase activity may enable DNA primase to also catalyze primer extension after primer synthesis. May also play a role in DNA repair. The protein is DNA primase small subunit PriS of Thermococcus onnurineus (strain NA1).